Here is a 485-residue protein sequence, read N- to C-terminus: Glutamyl-tRNA(Gln) amidotransferase subunit A (485 aa).

Active-site charge relay system residues include Lys79 and Ser154. Ser178 (acyl-ester intermediate) is an active-site residue.

This sequence belongs to the amidase family. GatA subfamily. As to quaternary structure, heterotrimer of A, B and C subunits.

It carries out the reaction L-glutamyl-tRNA(Gln) + L-glutamine + ATP + H2O = L-glutaminyl-tRNA(Gln) + L-glutamate + ADP + phosphate + H(+). Functionally, allows the formation of correctly charged Gln-tRNA(Gln) through the transamidation of misacylated Glu-tRNA(Gln) in organisms which lack glutaminyl-tRNA synthetase. The reaction takes place in the presence of glutamine and ATP through an activated gamma-phospho-Glu-tRNA(Gln). This Geobacillus thermodenitrificans (strain NG80-2) protein is Glutamyl-tRNA(Gln) amidotransferase subunit A.